The sequence spans 241 residues: Methylthioribulose-1-phosphate dehydratase (241 aa).

Residue Cys-96 coordinates substrate. His-114 and His-116 together coordinate Zn(2+). The Proton donor/acceptor role is filled by Glu-138. A Zn(2+)-binding site is contributed by His-194.

This sequence belongs to the aldolase class II family. MtnB subfamily. Homotetramer. Interacts with APAF1. May interact with CASP1. Requires Zn(2+) as cofactor. Expressed in skeletal muscle (at protein level).

Its subcellular location is the cytoplasm. It catalyses the reaction 5-(methylsulfanyl)-D-ribulose 1-phosphate = 5-methylsulfanyl-2,3-dioxopentyl phosphate + H2O. Its pathway is amino-acid biosynthesis; L-methionine biosynthesis via salvage pathway; L-methionine from S-methyl-5-thio-alpha-D-ribose 1-phosphate: step 2/6. Its function is as follows. Catalyzes the dehydration of methylthioribulose-1-phosphate (MTRu-1-P) into 2,3-diketo-5-methylthiopentyl-1-phosphate (DK-MTP-1-P). Functions in the methionine salvage pathway, which plays a key role in cancer, apoptosis, microbial proliferation and inflammation. May inhibit the CASP1-related inflammatory response (pyroptosis), the CASP9-dependent apoptotic pathway and the cytochrome c-dependent and APAF1-mediated cell death. The protein is Methylthioribulose-1-phosphate dehydratase of Mus musculus (Mouse).